Consider the following 366-residue polypeptide: tRNA 2-selenouridine synthase (366 aa).

Residues 12-135 (FLNDVPMMDA…MRTFLLDTLH (124 aa)) enclose the Rhodanese domain. Catalysis depends on C95, which acts as the S-selanylcysteine intermediate.

The protein belongs to the SelU family. As to quaternary structure, monomer.

The enzyme catalyses 5-methylaminomethyl-2-thiouridine(34) in tRNA + selenophosphate + (2E)-geranyl diphosphate + H2O + H(+) = 5-methylaminomethyl-2-selenouridine(34) in tRNA + (2E)-thiogeraniol + phosphate + diphosphate. The catalysed reaction is 5-methylaminomethyl-2-thiouridine(34) in tRNA + (2E)-geranyl diphosphate = 5-methylaminomethyl-S-(2E)-geranyl-thiouridine(34) in tRNA + diphosphate. It catalyses the reaction 5-methylaminomethyl-S-(2E)-geranyl-thiouridine(34) in tRNA + selenophosphate + H(+) = 5-methylaminomethyl-2-(Se-phospho)selenouridine(34) in tRNA + (2E)-thiogeraniol. It carries out the reaction 5-methylaminomethyl-2-(Se-phospho)selenouridine(34) in tRNA + H2O = 5-methylaminomethyl-2-selenouridine(34) in tRNA + phosphate. Functionally, involved in the post-transcriptional modification of the uridine at the wobble position (U34) of tRNA(Lys), tRNA(Glu) and tRNA(Gln). Catalyzes the conversion of 2-thiouridine (S2U-RNA) to 2-selenouridine (Se2U-RNA). Acts in a two-step process involving geranylation of 2-thiouridine (S2U) to S-geranyl-2-thiouridine (geS2U) and subsequent selenation of the latter derivative to 2-selenouridine (Se2U) in the tRNA chain. This Pseudomonas syringae pv. syringae (strain B728a) protein is tRNA 2-selenouridine synthase.